Reading from the N-terminus, the 349-residue chain is Achromobactin transport system permease protein CbrC (349 aa).

The next 10 membrane-spanning stretches (helical) occupy residues 32–52, 82–102, 111–131, 138–158, 168–188, 190–210, 216–236, 263–283, 290–310, and 325–345; these read LALL…KLML, VLAA…QAMI, ILGI…FLAA, LPLA…WLAW, VLTG…MLVF, PLTT…GASW, LGGW…QVRV, VALA…GLIA, LVAP…AGLV, and DLPA…YLLI.

Belongs to the binding-protein-dependent transport system permease family. FecCD subfamily.

It is found in the cell inner membrane. Part of the binding-protein-dependent transport system CbrABCD for uptake of the siderophore achromobactin. Probably responsible for the translocation of the substrate across the membrane. This is Achromobactin transport system permease protein CbrC (cbrC) from Dickeya dadantii (strain 3937) (Erwinia chrysanthemi (strain 3937)).